A 1335-amino-acid polypeptide reads, in one-letter code: Aldehyde oxidase 3 (1335 aa).

Residues 8–95 enclose the 2Fe-2S ferredoxin-type domain; the sequence is DELIFFVNGK…GAAVTTVEGI (88 aa). Positions 47, 52, 55, and 77 each coordinate [2Fe-2S] cluster. A Mo-molybdopterin-binding site is contributed by Gln-116. The [2Fe-2S] cluster site is built by Cys-117, Cys-120, Cys-152, and Cys-154. Residues 236–421 enclose the FAD-binding PCMH-type domain; sequence FRGERTTWIA…ISVFVPRSSK (186 aa). 264–271 contacts FAD; sequence LVIGNTYL. Ser-320 is modified (phosphoserine). Residues Ser-354, His-358, Asp-367, and Leu-411 each contribute to the FAD site. Residues Ala-802, Leu-1043, and Gln-1199 each coordinate Mo-molybdopterin. The active-site Proton acceptor; for azaheterocycle hydroxylase activity is Glu-1266.

Belongs to the xanthine dehydrogenase family. In terms of assembly, homodimer. Requires [2Fe-2S] cluster as cofactor. FAD serves as cofactor. The cofactor is Mo-molybdopterin. As to expression, highly expressed in liver (at protein level). In liver, the expression is greater in males than females.

The protein localises to the cytoplasm. The enzyme catalyses an aldehyde + O2 + H2O = a carboxylate + H2O2 + H(+). Inhibited by potassium cyanide, menadione, benzamidine, raloxifene and norharmane. In terms of biological role, oxidase with broad substrate specificity, oxidizing aromatic azaheterocycles, such as N1-methylnicotinamide and phthalazine, as well as aldehydes, such as benzaldehyde, retinal and pyridoxal. Plays a key role in the metabolism of xenobiotics and drugs containing aromatic azaheterocyclic substituents. Is probably involved in the regulation of reactive oxygen species homeostasis. May be a prominent source of superoxide generation via the one-electron reduction of molecular oxygen. May also catalyze nitric oxide (NO) production via the reduction of nitrite to NO with NADH or aldehyde as electron donor. In Mus musculus (Mouse), this protein is Aldehyde oxidase 3 (Aox3).